The sequence spans 209 residues: Uracil phosphoribosyltransferase (209 aa).

5-phospho-alpha-D-ribose 1-diphosphate contacts are provided by residues R79, R104, and 131-139 (DPMLATGGS). Residues I194 and 199 to 201 (GDA) contribute to the uracil site. 5-phospho-alpha-D-ribose 1-diphosphate is bound at residue D200.

This sequence belongs to the UPRTase family. Requires Mg(2+) as cofactor.

The catalysed reaction is UMP + diphosphate = 5-phospho-alpha-D-ribose 1-diphosphate + uracil. The protein operates within pyrimidine metabolism; UMP biosynthesis via salvage pathway; UMP from uracil: step 1/1. Its activity is regulated as follows. Allosterically activated by GTP. Functionally, catalyzes the conversion of uracil and 5-phospho-alpha-D-ribose 1-diphosphate (PRPP) to UMP and diphosphate. This is Uracil phosphoribosyltransferase from Streptococcus equi subsp. zooepidemicus (strain MGCS10565).